We begin with the raw amino-acid sequence, 378 residues long: GDP-mannose-dependent alpha-mannosyltransferase (378 aa).

It belongs to the glycosyltransferase group 1 family. Glycosyltransferase 4 subfamily.

It participates in phospholipid metabolism; phosphatidylinositol metabolism. Functionally, catalyzes the addition of a mannose residue from GDP-D-mannose to GlcAGroAc2 to generate 1,2-di-O-C16/C18:1-(alpha-D-mannopyranosyl)-(1-4)-(alpha-D-glucopyranosyluronic acid)-(1-3)-glycerol(ManGlcAGroAc2). The protein is GDP-mannose-dependent alpha-mannosyltransferase (mgtA) of Mycobacterium tuberculosis (strain CDC 1551 / Oshkosh).